The following is a 495-amino-acid chain: Heat stress transcription factor A-1a (495 aa).

The DNA-binding element occupies 50-144 (PPPFLSKTYD…LLKKISRRKS (95 aa)). A disordered region spans residues 140 to 164 (SRRKSVQGHGSSSSNPQSQQLSQGQ). The segment covering 146 to 164 (QGHGSSSSNPQSQQLSQGQ) has biased composition (low complexity). The segment at 172 to 238 (SCVEVGKFGL…QIMSFLAKAV (67 aa)) is hydrophobic repeat HR-A/B. A disordered region spans residues 255–288 (NMHVTEANKKRRLREDSTAATESNSHSHSLEASD). The Nuclear localization signal signature appears at 262–268 (NKKRRLR). Positions 272–281 (TAATESNSHS) are enriched in polar residues. An AHA motif is present at residues 433-442 (FEFLEEYMPE). Positions 445 to 477 (VFGDATTLENNNNNNNNNNNNNNNNNNNNTNGR) are disordered. Residues 454–473 (NNNNNNNNNNNNNNNNNNNN) show a composition bias toward low complexity. The Nuclear export signal signature appears at 482 to 489 (LIEELGLL).

Belongs to the HSF family. Class A subfamily. In terms of assembly, homotrimer. Interacts with HSP70-1 and HSP70-4. Binds to CRK1. Binds to HSBP. In terms of processing, exhibits temperature-dependent phosphorylation. Phosphorylated by CRK1. Constitutively expressed.

It localises to the cytoplasm. Its subcellular location is the nucleus. Functionally, transcriptional activator that specifically binds DNA sequence 5'-AGAAnnTTCT-3' known as heat shock promoter elements (HSE). In Arabidopsis thaliana (Mouse-ear cress), this protein is Heat stress transcription factor A-1a (HSFA1A).